Reading from the N-terminus, the 454-residue chain is MSNLPSEPEFEQAYKELAYTLENSSLFQKHPEYRTALAVASIPERVIQFRVVWEDDNGNVQVNRGYRVQFNSALGPYKGGLRLHPSVNLSILKFLGFEQIFKNALTGLSMGGGKGGADFDPKGKSDAEIRRFCCAFMAELHKHIGADTDVPAGDIGVGGREIGYMFGAYRKAANRFEGVLTGKGLSWGGSLIRPEATGYGLVYYVGHMLEYSGAGSYAGKRVALSGSGNVAQYAALKLIELGATVVSLSDSKGALVATGESGITVEDINAIMAIKEARQSLTTFQHAGHVKWIEGARPWLHVGKVDIALPCATQNEVSKEEAEGLLAAGCKFVAEGSNMGCTLEAIEVFENNRKEKKGEAVWYAPGKAANCGGVAVSGLEMAQNSQRLNWTQAEVDEKLKDIMKNAFFNGLNTAKTYAEAAEGELPSLVAGSNIAGFVKVPQAMHDQGDWWSKN.

S2 is modified (N-acetylserine). K114 is a catalytic residue.

Belongs to the Glu/Leu/Phe/Val dehydrogenases family. As to quaternary structure, homohexamer.

The enzyme catalyses L-glutamate + NADP(+) + H2O = 2-oxoglutarate + NH4(+) + NADPH + H(+). This Neurospora sitophila (Chrysonilia sitophila) protein is NADP-specific glutamate dehydrogenase (GDH).